A 351-amino-acid chain; its full sequence is MINNTEIRQNWTVAEVDQLFEMPFMDLVFQAQTTHRANFPLNEVQVSTLLSIKTGACPEDCKYCPQSARYNTGLAKEQLIEVAKVVKAAKEAKATGSTRFCMGAAWKNPKQRDMPYLLDMIKEVRALGLESCMTLGMLDNNQAEQLSNAGLDYYNHNLDTSPEYYDKIITTRTYQDRLDTLENVRNSGMKVCSGGIVGLGEAGSDRSGLLVQLANLPQQPESVPINKLVKVKGTPLENADDLDDFTFIKTIAIARLLMPKSHVRLSAGRDDMNEQTQALCFMAGANSIFYGCKLLTTANPDENSDTRLFEKLGINKEAINFSPSEAEKKVDAAIVRFNEKDELFFDATSKA.

A Radical SAM core domain is found at 42 to 269 (NEVQVSTLLS…KSHVRLSAGR (228 aa)). Residues cysteine 57, cysteine 61, and cysteine 64 each contribute to the [4Fe-4S] cluster site. Cysteine 101, cysteine 132, cysteine 192, and arginine 264 together coordinate [2Fe-2S] cluster.

It belongs to the radical SAM superfamily. Biotin synthase family. As to quaternary structure, homodimer. It depends on [4Fe-4S] cluster as a cofactor. [2Fe-2S] cluster serves as cofactor.

It catalyses the reaction (4R,5S)-dethiobiotin + (sulfur carrier)-SH + 2 reduced [2Fe-2S]-[ferredoxin] + 2 S-adenosyl-L-methionine = (sulfur carrier)-H + biotin + 2 5'-deoxyadenosine + 2 L-methionine + 2 oxidized [2Fe-2S]-[ferredoxin]. It functions in the pathway cofactor biosynthesis; biotin biosynthesis; biotin from 7,8-diaminononanoate: step 2/2. Catalyzes the conversion of dethiobiotin (DTB) to biotin by the insertion of a sulfur atom into dethiobiotin via a radical-based mechanism. The chain is Biotin synthase from Psychromonas ingrahamii (strain DSM 17664 / CCUG 51855 / 37).